The chain runs to 162 residues: uncharacterized protein (162 aa).

The signal sequence occupies residues 1-24; the sequence is MCKRFKFLLAVSALFISITVVLAG. Cysteine 25 is lipidated: N-palmitoyl cysteine. A lipid anchor (S-diacylglycerol cysteine) is attached at cysteine 25.

The protein resides in the cell membrane. This is an uncharacterized protein from Bacillus anthracis.